The sequence spans 355 residues: Heat-inducible transcription repressor HrcA (355 aa).

The protein belongs to the HrcA family.

Its function is as follows. Negative regulator of class I heat shock genes (grpE-dnaK-dnaJ and groELS operons). Prevents heat-shock induction of these operons. The sequence is that of Heat-inducible transcription repressor HrcA from Nitratidesulfovibrio vulgaris (strain DSM 19637 / Miyazaki F) (Desulfovibrio vulgaris).